The following is a 542-amino-acid chain: Ribulokinase 2 (542 aa).

Belongs to the ribulokinase family.

It catalyses the reaction D-ribulose + ATP = D-ribulose 5-phosphate + ADP + H(+). It carries out the reaction L-ribulose + ATP = L-ribulose 5-phosphate + ADP + H(+). Its pathway is carbohydrate degradation; L-arabinose degradation via L-ribulose; D-xylulose 5-phosphate from L-arabinose (bacterial route): step 2/3. This chain is Ribulokinase 2, found in Staphylococcus saprophyticus subsp. saprophyticus (strain ATCC 15305 / DSM 20229 / NCIMB 8711 / NCTC 7292 / S-41).